The following is a 435-amino-acid chain: Putative pyridoxal-phosphate dependent protein F13B12.4 (435 aa).

The first 18 residues, 1–18, serve as a signal peptide directing secretion; it reads MKLLLLALFLSISASCLA. Residue asparagine 79 is glycosylated (N-linked (GlcNAc...) asparagine). An N6-(pyridoxal phosphate)lysine modification is found at lysine 89. 235–239 lines the pyridoxal 5'-phosphate pocket; the sequence is GTGGT. An N-linked (GlcNAc...) asparagine glycan is attached at asparagine 277. Pyridoxal 5'-phosphate is bound at residue serine 342.

This sequence belongs to the cysteine synthase/cystathionine beta-synthase family. Highly divergent.

In Caenorhabditis elegans, this protein is Putative pyridoxal-phosphate dependent protein F13B12.4.